The chain runs to 961 residues: E3 ubiquitin-protein ligase TRIM37 (961 aa).

The residue at position 1 (Met-1) is an N-acetylmethionine. The segment at 15–55 adopts an RING-type; degenerate zinc-finger fold; sequence CFICMEKLRDARLCPHCSKLCCFSCIRRWLTEQRAQCPHCR. The B box-type zinc-finger motif lies at 90-132; that stretch reads NEKDKCENHHEKLSVFCWTCKKCICHQCALWGGMHGGHTFKPL. Zn(2+) is bound by residues Cys-95, His-98, Cys-117, and His-124. Residues 132–234 adopt a coiled-coil conformation; it reads LAEIYEQHVT…VEHQLRSCSK (103 aa). An MATH domain is found at 276-403; it reads YDSATFVLEN…NDTVILRFQV (128 aa). A coiled-coil region spans residues 419–450; that stretch reads ITQLEAAQTGYIQQINNLKERLTIELSRTQKS. 5 disordered regions span residues 447 to 514, 529 to 561, 645 to 665, 776 to 811, and 874 to 961; these read TQKS…HHEL, VNHLDGSSSSASSTATSNTEENDIDEETMSGEN, SLLQPTASYSRKDKDQRKQQA, AVDSGENSRSKGDCQVLAEGSSGSSQSGSRHSSPRA, and LESH…GGGR. Position 454 is a phosphoserine (Ser-454). Basic and acidic residues predominate over residues 504-514; sequence KIQNEDYHHEL. The span at 535–545 shows a compositional bias: low complexity; it reads SSSSASSTATS. Acidic residues predominate over residues 548-561; it reads EENDIDEETMSGEN. Residues 776 to 787 are compositionally biased toward basic and acidic residues; the sequence is AVDSGENSRSKG. Positions 795 to 806 are enriched in low complexity; the sequence is GSSGSSQSGSRH. The span at 903–915 shows a compositional bias: acidic residues; that stretch reads SDIECDTENEEQE.

It belongs to the TRIM/RBCC family. In terms of assembly, associates with the PRC2/EED-EZH2 complex. In terms of processing, auto-ubiquitinated. As to expression, highly expressed in testis and brain. In embryonic tissues, expressed in epithelia, including ducts of the developing pancreas, epithelium of the midgut and nasal epithelium. In adult, detected in the central and peripheral nervous systems, including enteric ganglia, retina and the adrenal medulla (at protein level).

The protein localises to the chromosome. The protein resides in the cytoplasm. It is found in the perinuclear region. Its subcellular location is the peroxisome membrane. It carries out the reaction S-ubiquitinyl-[E2 ubiquitin-conjugating enzyme]-L-cysteine + [acceptor protein]-L-lysine = [E2 ubiquitin-conjugating enzyme]-L-cysteine + N(6)-ubiquitinyl-[acceptor protein]-L-lysine.. It functions in the pathway protein modification; protein ubiquitination. Functionally, E3 ubiquitin-protein ligase required to prevent centriole reduplication. Probably acts by ubiquitinating positive regulators of centriole reduplication. Mediates monoubiquitination of 'Lys-119' of histone H2A (H2AK119Ub), a specific tag for epigenetic transcriptional repression: associates with some Polycomb group (PcG) multiprotein PRC2-like complex and mediates repression of target genes. Also acts as a positive regulator of peroxisome import by mediating monoubiquitination of PEX5 at 'Lys-472': monoubiquitination promotes PEX5 stabilitation by preventing its polyubiquitination and degradation by the proteasome. The protein is E3 ubiquitin-protein ligase TRIM37 of Mus musculus (Mouse).